The sequence spans 665 residues: DNA mismatch repair protein MutL (665 aa).

Composition is skewed to polar residues over residues 348 to 361 and 407 to 421; these read LEAT…NGLS and PSSQ…NSRY. Disordered stretches follow at residues 348-370 and 385-445; these read LEAT…AEEG and VHRG…STSA. The span at 426–445 shows a compositional bias: low complexity; the sequence is YSTNAASTNTASNYSHSTSA.

It belongs to the DNA mismatch repair MutL/HexB family.

Its function is as follows. This protein is involved in the repair of mismatches in DNA. It is required for dam-dependent methyl-directed DNA mismatch repair. May act as a 'molecular matchmaker', a protein that promotes the formation of a stable complex between two or more DNA-binding proteins in an ATP-dependent manner without itself being part of a final effector complex. In Shewanella denitrificans (strain OS217 / ATCC BAA-1090 / DSM 15013), this protein is DNA mismatch repair protein MutL.